The sequence spans 1102 residues: PAN2-PAN3 deadenylation complex catalytic subunit PAN2 (1102 aa).

WD repeat units lie at residues 20-59, 104-144, and 269-308; these read DYPR…RYTA, DEME…IVKQ, and NVMS…HFTD. Residues 308–445 are linker; the sequence is DMAIPIEMPK…STDELESLKP (138 aa). Residues 423-442 form a disordered region; it reads AVPDPKVEQVPESSTDELES. The USP domain maps to 446 to 833; that stretch reads EAPPIYRNLE…LPAVLLFQVK (388 aa). The 174-residue stretch at 881–1054 folds into the Exonuclease domain; it reads VGLDTEFVSL…EDARTALKLY (174 aa). Positions 884, 886, 993, and 1046 each coordinate a divalent metal cation.

The protein belongs to the peptidase C19 family. PAN2 subfamily. As to quaternary structure, forms a heterotrimer with an asymmetric homodimer of the regulatory subunit PAN3 to form the poly(A)-nuclease (PAN) deadenylation complex. A divalent metal cation serves as cofactor.

The protein localises to the cytoplasm. It catalyses the reaction Exonucleolytic cleavage of poly(A) to 5'-AMP.. Positively regulated by the regulatory subunit PAN3. Functionally, catalytic subunit of the poly(A)-nuclease (PAN) deadenylation complex, one of two cytoplasmic mRNA deadenylases involved in mRNA turnover. PAN specifically shortens poly(A) tails of RNA and the activity is stimulated by poly(A)-binding protein PAB1. PAN deadenylation is followed by rapid degradation of the shortened mRNA tails by the CCR4-NOT complex. Deadenylated mRNAs are then degraded by two alternative mechanisms, namely exosome-mediated 3'-5' exonucleolytic degradation, or deadenylation-dependent mRNA decaping and subsequent 5'-3' exonucleolytic degradation by XRN1. May also be involved in post-transcriptional maturation of mRNA poly(A) tails. This is PAN2-PAN3 deadenylation complex catalytic subunit PAN2 from Chaetomium globosum (strain ATCC 6205 / CBS 148.51 / DSM 1962 / NBRC 6347 / NRRL 1970) (Soil fungus).